Reading from the N-terminus, the 239-residue chain is ATP-dependent dethiobiotin synthetase BioD (239 aa).

Position 15–20 (15–20 (EIGKTF)) interacts with ATP. Thr-19 lines the Mg(2+) pocket. Residue Lys-40 is part of the active site. ATP contacts are provided by residues Asp-57, 118–121 (EGVG), and 178–179 (NH). The Mg(2+) site is built by Asp-57 and Glu-118.

Belongs to the dethiobiotin synthetase family. Homodimer. It depends on Mg(2+) as a cofactor.

Its subcellular location is the cytoplasm. The enzyme catalyses (7R,8S)-7,8-diammoniononanoate + CO2 + ATP = (4R,5S)-dethiobiotin + ADP + phosphate + 3 H(+). It participates in cofactor biosynthesis; biotin biosynthesis; biotin from 7,8-diaminononanoate: step 1/2. Catalyzes a mechanistically unusual reaction, the ATP-dependent insertion of CO2 between the N7 and N8 nitrogen atoms of 7,8-diaminopelargonic acid (DAPA, also called 7,8-diammoniononanoate) to form a ureido ring. This chain is ATP-dependent dethiobiotin synthetase BioD, found in Burkholderia multivorans (strain ATCC 17616 / 249).